The primary structure comprises 148 residues: Large ribosomal subunit protein bL9 (148 aa).

This sequence belongs to the bacterial ribosomal protein bL9 family.

Functionally, binds to the 23S rRNA. In Hahella chejuensis (strain KCTC 2396), this protein is Large ribosomal subunit protein bL9.